Here is a 417-residue protein sequence, read N- to C-terminus: Serine hydroxymethyltransferase (417 aa).

Residues L112 and 116–118 (GHL) contribute to the (6S)-5,6,7,8-tetrahydrofolate site. K221 carries the post-translational modification N6-(pyridoxal phosphate)lysine. E247 contributes to the (6S)-5,6,7,8-tetrahydrofolate binding site.

The protein belongs to the SHMT family. As to quaternary structure, homodimer. The cofactor is pyridoxal 5'-phosphate.

It is found in the cytoplasm. The catalysed reaction is (6R)-5,10-methylene-5,6,7,8-tetrahydrofolate + glycine + H2O = (6S)-5,6,7,8-tetrahydrofolate + L-serine. It functions in the pathway one-carbon metabolism; tetrahydrofolate interconversion. The protein operates within amino-acid biosynthesis; glycine biosynthesis; glycine from L-serine: step 1/1. Catalyzes the reversible interconversion of serine and glycine with tetrahydrofolate (THF) serving as the one-carbon carrier. This reaction serves as the major source of one-carbon groups required for the biosynthesis of purines, thymidylate, methionine, and other important biomolecules. Also exhibits THF-independent aldolase activity toward beta-hydroxyamino acids, producing glycine and aldehydes, via a retro-aldol mechanism. The protein is Serine hydroxymethyltransferase of Borreliella burgdorferi (strain ATCC 35210 / DSM 4680 / CIP 102532 / B31) (Borrelia burgdorferi).